The sequence spans 1136 residues: Probable phospholipid-transporting ATPase IIB (1136 aa).

Topologically, residues 1-145 are cytoplasmic; it reads MADQIPLYPV…IKNQKYNIFT (145 aa). A helical transmembrane segment spans residues 146 to 166; the sequence is FIPGVLYEQFKFFLNLYFLIV. Residues 167–174 are Extracellular-facing; the sequence is SCSQFVPA. A helical membrane pass occupies residues 175–195; sequence LKIGYLYTYWAPLGFVLAVTI. The Cytoplasmic portion of the chain corresponds to 196–383; the sequence is MREAVDEFRR…LDLELNQLTK (188 aa). A helical transmembrane segment spans residues 384–404; that stretch reads ALFLALVALSVVMVTLQGFAG. At 405 to 408 the chain is on the extracellular side; that stretch reads PWYR. The chain crosses the membrane as a helical span at residues 409–429; that stretch reads SLFRFLLLFSYIIPISLRVNL. The Cytoplasmic portion of the chain corresponds to 430–939; sequence DMGKAAYGWM…ALGQFVMHRG (510 aa). Asp469 acts as the 4-aspartylphosphate intermediate in catalysis. ATP contacts are provided by Asp469, Lys470, and Thr471. Residue Asp469 participates in Mg(2+) binding. Residue Thr471 participates in Mg(2+) binding. Residues 514–538 form a disordered region; it reads AGGSSAASTPPRKAPSSAPKVRRSV. ATP-binding residues include Glu591, Phe633, Lys638, Lys657, Arg686, Thr687, Thr766, Gly767, Asp768, Arg848, and Lys854. Asp874 contacts Mg(2+). 2 residues coordinate ATP: Asn877 and Asp878. Residue Asp878 coordinates Mg(2+). A helical transmembrane segment spans residues 940-960; sequence LIISTMQAVFSSVFYFASVPL. Over 961–962 the chain is Extracellular; sequence YQ. A helical transmembrane segment spans residues 963–983; that stretch reads GFLMVGYATVYTMFPVFSLVL. At 984–1012 the chain is on the cytoplasmic side; it reads DQDVKPEMAMLYPELYKDLTKGRSLSFKT. A helical membrane pass occupies residues 1013-1033; it reads FLVWVLISIYQGGILMFGALV. The Extracellular segment spans residues 1034–1041; sequence LFESEFVH. A helical transmembrane segment spans residues 1042–1062; the sequence is VVAISFTALVLTELLMVALTV. Residues 1063–1066 are Cytoplasmic-facing; it reads RTWH. A helical membrane pass occupies residues 1067–1087; sequence WLMVVAQLLSLGCYVASLAFL. Residues 1088–1098 are Extracellular-facing; that stretch reads NEYFDVAFITT. A helical membrane pass occupies residues 1099–1119; sequence VTFVWKVSAITVVSCLPLYVL. Topologically, residues 1120 to 1136 are cytoplasmic; sequence KYLKRKLSPPSYSKLSS.

The protein belongs to the cation transport ATPase (P-type) (TC 3.A.3) family. Type IV subfamily. Requires Mg(2+) as cofactor.

The protein resides in the golgi apparatus. Its subcellular location is the trans-Golgi network membrane. It carries out the reaction ATP + H2O + phospholipidSide 1 = ADP + phosphate + phospholipidSide 2.. The chain is Probable phospholipid-transporting ATPase IIB (ATP9B) from Bos taurus (Bovine).